Consider the following 502-residue polypeptide: N-sulphoglucosamine sulphohydrolase (502 aa).

An N-terminal signal peptide occupies residues Met-1–Ala-20. Positions 31 and 32 each coordinate Ca(2+). N-linked (GlcNAc...) asparagine glycosylation is present at Asn-41. Cys-70 is a binding site for Ca(2+). Cys-70 functions as the Nucleophile in the catalytic mechanism. Cys-70 is subject to 3-oxoalanine (Cys). N-linked (GlcNAc...) asparagine glycosylation is found at Asn-142 and Asn-151. Cys-183 and Cys-194 form a disulfide bridge. N-linked (GlcNAc...) asparagine glycosylation is present at Asn-264. Ca(2+) contacts are provided by Asp-273 and Asn-274. A glycan (N-linked (GlcNAc...) asparagine) is linked at Asn-413. Cys-481 and Cys-495 are oxidised to a cystine.

The protein belongs to the sulfatase family. Requires Ca(2+) as cofactor. Post-translationally, the conversion to 3-oxoalanine (also known as C-formylglycine, FGly), of a serine or cysteine residue in prokaryotes and of a cysteine residue in eukaryotes, is critical for catalytic activity.

It is found in the lysosome. The enzyme catalyses N-sulfo-D-glucosamine + H2O = D-glucosamine + sulfate. Functionally, catalyzes a step in lysosomal heparan sulfate degradation. The sequence is that of N-sulphoglucosamine sulphohydrolase (SGSH) from Homo sapiens (Human).